We begin with the raw amino-acid sequence, 118 residues long: MHTLDSLDAESLRTDVPEFWPGDTLKVHVRVVEGNRQRIQVFQGAVIRRQGGGVRETFTVRKVSFGVGVERTFPLHSPIVSKIEIVSRGDVRRAKLYYLRQLRGKAAKIKEKREPVAR.

It belongs to the bacterial ribosomal protein bL19 family.

Its function is as follows. This protein is located at the 30S-50S ribosomal subunit interface and may play a role in the structure and function of the aminoacyl-tRNA binding site. This chain is Large ribosomal subunit protein bL19, found in Frankia casuarinae (strain DSM 45818 / CECT 9043 / HFP020203 / CcI3).